We begin with the raw amino-acid sequence, 273 residues long: 2,3,4,5-tetrahydropyridine-2,6-dicarboxylate N-succinyltransferase (273 aa).

Residues Arg-104 and Asp-141 each coordinate substrate.

The protein belongs to the transferase hexapeptide repeat family. In terms of assembly, homotrimer.

The protein resides in the cytoplasm. The enzyme catalyses (S)-2,3,4,5-tetrahydrodipicolinate + succinyl-CoA + H2O = (S)-2-succinylamino-6-oxoheptanedioate + CoA. The protein operates within amino-acid biosynthesis; L-lysine biosynthesis via DAP pathway; LL-2,6-diaminopimelate from (S)-tetrahydrodipicolinate (succinylase route): step 1/3. The polypeptide is 2,3,4,5-tetrahydropyridine-2,6-dicarboxylate N-succinyltransferase (Psychrobacter cryohalolentis (strain ATCC BAA-1226 / DSM 17306 / VKM B-2378 / K5)).